The primary structure comprises 226 residues: MSKLLPIKVWGQGGPNPPRVAIILEELGLPYEFMPIQLSQVKEPEYLAINPNGRLPAIYDPNTDLTLWESGAIVEYLVERYDTAHDISFPRDTNDAQHARQWLFFQASGQGPYYGQACWFKKYHPEPVPSALERYIKEMNRVSGVVDGYLAKQPVPPGGDGPWLVGNKCSFADLAWVSWQMTLKKIIQTEDGYDVENFPHLKNWLDRMVAREPVKKVLSAVMPPPS.

A GST N-terminal domain is found at 4–85 (LLPIKVWGQG…YLVERYDTAH (82 aa)). The GST C-terminal domain maps to 92 to 226 (DTNDAQHARQ…VLSAVMPPPS (135 aa)).

It belongs to the GST superfamily.

The protein operates within secondary metabolite biosynthesis. Glutathione S-transferase-like protein; part of the gene cluster that mediates the biosynthesis of geodin, an intermediate in the biosynthesis of other natural products. The pathway begins with the synthesis of atrochrysone thioester by the polyketide synthase (PKS) gedC. The atrochrysone carboxyl ACP thioesterase gedB then breaks the thioester bond and releases the atrochrysone carboxylic acid from gedC. The atrochrysone carboxylic acid is then converted to atrochrysone which is further transformed into emodinanthrone. The next step is performed by the emodinanthrone oxygenase gedH that catalyzes the oxidation of emodinanthrone to emodin. Emodin O-methyltransferase encoded probably by gedA then catalyzes methylation of the 8-hydroxy group of emodin to form questin. Ring cleavage of questin by questin oxidase gedK leads to desmethylsulochrin via several intermediates including questin epoxide. Another methylation step probably catalyzed by methyltransferase gedG leads to the formation of sulochrin which is further converted to dihydrogeodin by the sulochrin halogenase gedL. Finally, the dihydrogeodin oxidase gedJ catalyzes the stereospecific phenol oxidative coupling reaction converting dihydrogeodin to geodin. This chain is Glutathione S-transferase-like protein gedE, found in Aspergillus terreus (strain NIH 2624 / FGSC A1156).